We begin with the raw amino-acid sequence, 593 residues long: Pyruvate kinase isozyme A, chloroplastic (593 aa).

The tract at residues 57–94 (DEPQSSPVLVSENGSGGVLSSATQEYGRNAAPGTDSSS) is disordered. A substrate-binding site is contributed by Arg-144. 3 residues coordinate K(+): Asn-146, Asp-178, and Thr-179. 146–149 (NMCH) lines the ATP pocket. Glu-343 is a binding site for Mg(2+). Residues Gly-366, Asp-367, and Ser-399 each contribute to the substrate site. Position 367 (Asp-367) interacts with Mg(2+).

It belongs to the pyruvate kinase family. Mg(2+) is required as a cofactor. K(+) serves as cofactor. In terms of tissue distribution, highest levels in roots. Also found in stems, leaves and flowers.

It is found in the plastid. The protein localises to the chloroplast. The catalysed reaction is pyruvate + ATP = phosphoenolpyruvate + ADP + H(+). It functions in the pathway carbohydrate degradation; glycolysis; pyruvate from D-glyceraldehyde 3-phosphate: step 5/5. This chain is Pyruvate kinase isozyme A, chloroplastic, found in Nicotiana tabacum (Common tobacco).